Consider the following 272-residue polypeptide: Dihydropteroate synthase (272 aa).

The 256-residue stretch at 1–256 folds into the Pterin-binding domain; it reads MIKTKIMGIL…NVLLNTRLAQ (256 aa). Asn11 is a Mg(2+) binding site. (7,8-dihydropterin-6-yl)methyl diphosphate contacts are provided by residues Thr51, Asp89, Asn108, Asp172, Lys208, and 244 to 246; that span reads RVH.

This sequence belongs to the DHPS family. As to quaternary structure, homodimer. The cofactor is Mg(2+).

The catalysed reaction is (7,8-dihydropterin-6-yl)methyl diphosphate + 4-aminobenzoate = 7,8-dihydropteroate + diphosphate. Its pathway is cofactor biosynthesis; tetrahydrofolate biosynthesis; 7,8-dihydrofolate from 2-amino-4-hydroxy-6-hydroxymethyl-7,8-dihydropteridine diphosphate and 4-aminobenzoate: step 1/2. Its function is as follows. Catalyzes the condensation of para-aminobenzoate (pABA) with 6-hydroxymethyl-7,8-dihydropterin diphosphate (DHPt-PP) to form 7,8-dihydropteroate (H2Pte), the immediate precursor of folate derivatives. The chain is Dihydropteroate synthase (folP) from Staphylococcus epidermidis (strain ATCC 12228 / FDA PCI 1200).